A 79-amino-acid polypeptide reads, in one-letter code: Transcriptional regulator SplA (79 aa).

Its function is as follows. Regulator of the spore photoproduct lyase operon (splAB). The protein is Transcriptional regulator SplA (splA) of Bacillus subtilis (strain 168).